The chain runs to 327 residues: DNA-directed RNA polymerase subunit alpha (327 aa).

An alpha N-terminal domain (alpha-NTD) region spans residues 1–231 (MIYQMQMPAK…DHVLLFADFS (231 aa)). The tract at residues 247–327 (DEFETMRRLL…GMDITRYQMK (81 aa)) is alpha C-terminal domain (alpha-CTD).

The protein belongs to the RNA polymerase alpha chain family. In terms of assembly, homodimer. The RNAP catalytic core consists of 2 alpha, 1 beta, 1 beta' and 1 omega subunit. When a sigma factor is associated with the core the holoenzyme is formed, which can initiate transcription.

It carries out the reaction RNA(n) + a ribonucleoside 5'-triphosphate = RNA(n+1) + diphosphate. In terms of biological role, DNA-dependent RNA polymerase catalyzes the transcription of DNA into RNA using the four ribonucleoside triphosphates as substrates. The sequence is that of DNA-directed RNA polymerase subunit alpha from Chlorobium chlorochromatii (strain CaD3).